We begin with the raw amino-acid sequence, 524 residues long: Probable cytosol aminopeptidase (524 aa).

Mn(2+) contacts are provided by Lys-288 and Asp-293. Lys-300 is an active-site residue. Mn(2+) is bound by residues Asp-311, Asp-370, and Glu-372. Arg-374 is an active-site residue.

This sequence belongs to the peptidase M17 family. The cofactor is Mn(2+).

The protein localises to the cytoplasm. It carries out the reaction Release of an N-terminal amino acid, Xaa-|-Yaa-, in which Xaa is preferably Leu, but may be other amino acids including Pro although not Arg or Lys, and Yaa may be Pro. Amino acid amides and methyl esters are also readily hydrolyzed, but rates on arylamides are exceedingly low.. The enzyme catalyses Release of an N-terminal amino acid, preferentially leucine, but not glutamic or aspartic acids.. Functionally, presumably involved in the processing and regular turnover of intracellular proteins. Catalyzes the removal of unsubstituted N-terminal amino acids from various peptides. The polypeptide is Probable cytosol aminopeptidase (pepA) (Mycobacterium leprae (strain TN)).